The following is a 326-amino-acid chain: Dolichyl-phosphate beta-glucosyltransferase (326 aa).

Over 1–7 (MWTCLCQ) the chain is Lumenal. The helical transmembrane segment at 8-28 (LCFYLLSTLAVAALSIAALVL) threads the bilayer. Topologically, residues 29–326 (YKTKPYPNIK…RIASIQKKEK (298 aa)) are cytoplasmic.

This sequence belongs to the glycosyltransferase 2 family.

It localises to the endoplasmic reticulum membrane. The enzyme catalyses a di-trans,poly-cis-dolichyl phosphate + UDP-alpha-D-glucose = a di-trans,poly-cis-dolichyl beta-D-glucosyl phosphate + UDP. Its pathway is protein modification; protein glycosylation. Functionally, required for normal production of N-glycosylated proteins in the endoplasmic reticulum (ER). Required for embryonic segmentation, dorsal-ventral patterning and gastrulation. Required for chitin orientation and shaping of the apical and lateral plasma membranes of epidermal cells during cuticle differentiation. Also required for correctly shaping apical membrane topology of the epithelia of other organs such as the midgut and the hindgut. This is Dolichyl-phosphate beta-glucosyltransferase (wol) from Drosophila melanogaster (Fruit fly).